Here is a 486-residue protein sequence, read N- to C-terminus: Aspartyl/glutamyl-tRNA(Asn/Gln) amidotransferase subunit B (486 aa).

Belongs to the GatB/GatE family. GatB subfamily. Heterotrimer of A, B and C subunits.

It catalyses the reaction L-glutamyl-tRNA(Gln) + L-glutamine + ATP + H2O = L-glutaminyl-tRNA(Gln) + L-glutamate + ADP + phosphate + H(+). The catalysed reaction is L-aspartyl-tRNA(Asn) + L-glutamine + ATP + H2O = L-asparaginyl-tRNA(Asn) + L-glutamate + ADP + phosphate + 2 H(+). Functionally, allows the formation of correctly charged Asn-tRNA(Asn) or Gln-tRNA(Gln) through the transamidation of misacylated Asp-tRNA(Asn) or Glu-tRNA(Gln) in organisms which lack either or both of asparaginyl-tRNA or glutaminyl-tRNA synthetases. The reaction takes place in the presence of glutamine and ATP through an activated phospho-Asp-tRNA(Asn) or phospho-Glu-tRNA(Gln). In Orientia tsutsugamushi (strain Boryong) (Rickettsia tsutsugamushi), this protein is Aspartyl/glutamyl-tRNA(Asn/Gln) amidotransferase subunit B.